The chain runs to 284 residues: Tropomyosin (284 aa).

Residues 1–284 adopt a coiled-coil conformation; the sequence is MEAIKKKMQA…DQTFAELTGY (284 aa).

This sequence belongs to the tropomyosin family. As to quaternary structure, homodimer.

In terms of biological role, tropomyosin, in association with the troponin complex, plays a central role in the calcium dependent regulation of muscle contraction. This Dermatophagoides farinae (American house dust mite) protein is Tropomyosin.